The sequence spans 258 residues: Tryptophan synthase alpha chain (258 aa).

Residues glutamate 52 and aspartate 63 each act as proton acceptor in the active site.

Belongs to the TrpA family. In terms of assembly, tetramer of two alpha and two beta chains.

The enzyme catalyses (1S,2R)-1-C-(indol-3-yl)glycerol 3-phosphate + L-serine = D-glyceraldehyde 3-phosphate + L-tryptophan + H2O. The protein operates within amino-acid biosynthesis; L-tryptophan biosynthesis; L-tryptophan from chorismate: step 5/5. In terms of biological role, the alpha subunit is responsible for the aldol cleavage of indoleglycerol phosphate to indole and glyceraldehyde 3-phosphate. The polypeptide is Tryptophan synthase alpha chain (Streptococcus pneumoniae (strain ATCC 700669 / Spain 23F-1)).